Consider the following 676-residue polypeptide: Lon-like protease BrxL (676 aa).

The protein belongs to the BrxL family.

Functionally, BREX systems (bacteriophage exclusion) provide immunity against bacteriophage. Part of a type 1 BREX system. This system allows phage adsorption but prevents phage DNA replication, without degradation of the phage DNA. Methylation of bacterial DNA by PglX probably guides self/non-self discrimination. When the brxA-brxB-brxC-pglX and pglZ-brxL operons are transformed into a susceptible B.subtilis strain (BEST7003) they confer resistance to bacteriophages SPbeta, SP16, Zeta, phi3T and SP02 and partial protection to phages SP01 and SP82G (these include lytic and temperate phage). They do not protect against phages phi105, rho10 or rho14. Additionally confers a very slight reduction in efficiency of plasmid transformation. This chain is Lon-like protease BrxL, found in Bacillus cereus (strain H3081.97).